Here is a 261-residue protein sequence, read N- to C-terminus: Anamorsin homolog (261 aa).

The tract at residues 4 to 134 (VQENNQVLYI…EIGSAAKLSL (131 aa)) is N-terminal SAM-like domain. The tract at residues 134-173 (LGGGANKAKVAAVWKLDVDDDGEAEERIDEDELLDEEDKV) is linker. Positions 183, 192, 195, and 197 each coordinate [2Fe-2S] cluster. A fe-S binding site A region spans residues 183-197 (CGTTGKRKACKDCSC). [4Fe-4S] cluster contacts are provided by C222, C225, C233, and C236. 2 consecutive short sequence motifs (cx2C motif) follow at residues 222–225 (CGSC) and 233–236 (CATC). A fe-S binding site B region spans residues 222–236 (CGSCYLGDAFRCATC).

The protein belongs to the anamorsin family. In terms of assembly, monomer. [2Fe-2S] cluster serves as cofactor. The cofactor is [4Fe-4S] cluster.

The protein resides in the cytoplasm. The protein localises to the mitochondrion intermembrane space. Its function is as follows. Component of the cytosolic iron-sulfur (Fe-S) protein assembly (CIA) machinery. Required for the maturation of extramitochondrial Fe-S proteins. Part of an electron transfer chain functioning in an early step of cytosolic Fe-S biogenesis, facilitating the de novo assembly of a [4Fe-4S] cluster on the cytosolic Fe-S scaffold complex. Electrons are transferred from NADPH via a FAD- and FMN-containing diflavin oxidoreductase. Together with the diflavin oxidoreductase, also required for the assembly of the diferric tyrosyl radical cofactor of ribonucleotide reductase (RNR), probably by providing electrons for reduction during radical cofactor maturation in the catalytic small subunit. This is Anamorsin homolog from Culex quinquefasciatus (Southern house mosquito).